The following is a 359-amino-acid chain: GTP 3',8-cyclase 1 (359 aa).

In terms of domain architecture, Radical SAM core spans 21–241 (RCRRMMGDLR…SLEKRYGRIE (221 aa)). Residue Arg-30 coordinates GTP. 2 residues coordinate [4Fe-4S] cluster: Cys-37 and Cys-41. Residue Tyr-43 participates in S-adenosyl-L-methionine binding. Cys-44 provides a ligand contact to [4Fe-4S] cluster. GTP is bound at residue Arg-80. An S-adenosyl-L-methionine-binding site is contributed by Gly-84. Thr-115 provides a ligand contact to GTP. Ser-139 serves as a coordination point for S-adenosyl-L-methionine. Lys-176 serves as a coordination point for GTP. Residue Met-210 coordinates S-adenosyl-L-methionine. Residues Cys-273 and Cys-276 each contribute to the [4Fe-4S] cluster site. Residue 278-280 (RSR) coordinates GTP. Cys-290 contributes to the [4Fe-4S] cluster binding site.

It belongs to the radical SAM superfamily. MoaA family. Monomer and homodimer. [4Fe-4S] cluster serves as cofactor.

The enzyme catalyses GTP + AH2 + S-adenosyl-L-methionine = (8S)-3',8-cyclo-7,8-dihydroguanosine 5'-triphosphate + 5'-deoxyadenosine + L-methionine + A + H(+). It participates in cofactor biosynthesis; molybdopterin biosynthesis. Its function is as follows. Catalyzes the cyclization of GTP to (8S)-3',8-cyclo-7,8-dihydroguanosine 5'-triphosphate. The sequence is that of GTP 3',8-cyclase 1 from Mycobacterium tuberculosis (strain CDC 1551 / Oshkosh).